The primary structure comprises 321 residues: Olfactory receptor 51V1 (321 aa).

At 1–34 the chain is on the extracellular side; that stretch reads MFLSSRMITSVSPSTSTNSSFLLTGFSGMEQQYP. The N-linked (GlcNAc...) asparagine glycan is linked to asparagine 18. A helical transmembrane segment spans residues 35-55; the sequence is WLSIPFSSIYAMVLLGNCMVL. The Cytoplasmic portion of the chain corresponds to 56-63; sequence HVIWTEPS. The chain crosses the membrane as a helical span at residues 64-84; that stretch reads LHQPMFYFLSMLALTDLCMGL. The Extracellular portion of the chain corresponds to 85–108; the sequence is STVYTVLGILWGIIREISLDSCIA. Cysteines 106 and 188 form a disulfide. Residues 109 to 129 traverse the membrane as a helical segment; sequence QSYFIHGLSFMESSVLLTMAF. The Cytoplasmic segment spans residues 130–148; the sequence is DRYIAICNPLRYSSILTNS. Residues 149-169 traverse the membrane as a helical segment; the sequence is RIIKIGLTIIGRSFFFITPPI. Topologically, residues 170–205 are extracellular; sequence ICLKFFNYCHFHILSHSFCLHQDLLRLACSDIRFNS. Residues 206-226 form a helical membrane-spanning segment; sequence YYALMLVICILLLDAILILFS. Over 227-246 the chain is Cytoplasmic; that stretch reads YILILKSVLAVASQEERHKL. Residues 247–267 traverse the membrane as a helical segment; that stretch reads FQTCISHICAVLVFYIPIISL. Topologically, residues 268–282 are extracellular; sequence TMVHRFGKHLSPVAH. The helical transmembrane segment at 283 to 303 threads the bilayer; sequence VLIGNIYILFPPLMNPIIYSV. Residues 304 to 321 are Cytoplasmic-facing; sequence KTQQIHTRMLRLFSLKRY.

It belongs to the G-protein coupled receptor 1 family.

Its subcellular location is the cell membrane. Its function is as follows. Odorant receptor. This chain is Olfactory receptor 51V1 (OR51V1), found in Homo sapiens (Human).